The primary structure comprises 163 residues: tRNA-acetylating toxin 2 (163 aa).

Positions 89, 91, 96, 97, 98, 99, 101, 102, and 132 each coordinate acetyl-CoA. The active site involves Tyr137. Arg139 is an acetyl-CoA binding site.

The protein belongs to the acetyltransferase family. GNAT subfamily. Homodimer (in absence of antitoxin). Forms a complex with cognate antitoxin TacA2. Forms a 4:2 antitoxin:toxin complex with cognate antitoxin TacA2.

It catalyses the reaction glycyl-tRNA(Gly) + acetyl-CoA = N-acetylglycyl-tRNA(Gly) + CoA + H(+). Its function is as follows. Toxic component of a type II toxin-antitoxin (TA) system. Acetylates tRNA and inhibits translation. Acetylates exclusively Gly in situ. Overexpression during the lag phase of a tacA2-tacT2 deletion strain leads to very small increase in persister cells in the presence of cefotaxime but no detectable growth phenotype in absence of antibiotics. Compared to a protein with a single amino acid change (TacT2 from S.enterica NCTC 13349, Glu-29 is Lys in NCTC 13349) this protein binds tRNA very poorly and acetylates tRNA very poorly. Persister cell formation is neutralized by cognate antitoxin TacA2. Neutralized only by cognate antitoxin TacA2 (A8), but not by TacA1 or TacA3. Plays a role in persister cell formation. The TacA2-TacT2 complex both represses and derepresses expression of its own operon. The chain is tRNA-acetylating toxin 2 from Salmonella typhimurium (strain 14028s / SGSC 2262).